The sequence spans 383 residues: Na(+)/H(+) antiporter NhaA (383 aa).

Helical transmembrane passes span leucine 10–proline 30, leucine 56–isoleucine 76, isoleucine 91–serine 111, glycine 121–glycine 141, leucine 150–phenylalanine 170, serine 174–asparagine 194, valine 206–alanine 226, proline 254–serine 274, glycine 275–valine 295, glycine 327–phenylalanine 347, and alanine 355–leucine 375.

The protein belongs to the NhaA Na(+)/H(+) (TC 2.A.33) antiporter family.

The protein resides in the cell inner membrane. It carries out the reaction Na(+)(in) + 2 H(+)(out) = Na(+)(out) + 2 H(+)(in). In terms of biological role, na(+)/H(+) antiporter that extrudes sodium in exchange for external protons. This is Na(+)/H(+) antiporter NhaA from Francisella tularensis subsp. novicida (strain U112).